A 128-amino-acid chain; its full sequence is Head peptide (128 aa).

The signal sequence occupies residues 1-22 (MWKFASIVVLVVCLAWAVYCED). Gln-23 carries the post-translational modification Pyrrolidone carboxylic acid. Pro-26 bears the Hydroxyproline; partial mark. Residues 27-128 (SLKTRFGRSA…GRANKKRAAN (102 aa)) are disordered. Phe-32 is modified (phenylalanine amide). A propeptide spanning residues 35–55 (SADEPESDNYVSNDIMEKRSA) is cleaved from the precursor. Pyrrolidone carboxylic acid is present on Gln-56. Pro-59 carries the hydroxyproline; partial modification. Phe-65 is modified (phenylalanine amide). Residues 66 to 78 (GRSEGAEVMEKRS) show a composition bias toward basic and acidic residues. Positions 68–79 (SEGAEVMEKRSA) are excised as a propeptide. Gln-80 carries the post-translational modification Pyrrolidone carboxylic acid. Pro-83 is modified (hydroxyproline; partial). Phenylalanine amide is present on Phe-89. A propeptide spanning residues 92 to 128 (SVANPESDGYMRKRSAESEPFVTRIRHGRANKKRAAN) is cleaved from the precursor. Positions 115 to 128 (RIRHGRANKKRAAN) are enriched in basic residues.

The protein belongs to the NPY family. In terms of tissue distribution, expressed in the brain, terminal ganglion, and midgut of adults: numerous neurosecretory cells and midgut endocrine cells. Expression is dynamic depending on reproductive cycle.

Its subcellular location is the secreted. Has a role in inhibiting host-seeking behavior during a reproductive cycle. The polypeptide is Head peptide (Aedes aegypti (Yellowfever mosquito)).